A 337-amino-acid chain; its full sequence is Biotin synthase (337 aa).

Positions 62 to 289 (NAVQLSTLIS…KAMVRLSAGR (228 aa)) constitute a Radical SAM core domain. Residues C77, C81, and C84 each coordinate [4Fe-4S] cluster. 4 residues coordinate [2Fe-2S] cluster: C121, C152, C212, and R284.

It belongs to the radical SAM superfamily. Biotin synthase family. Homodimer. Requires [4Fe-4S] cluster as cofactor. The cofactor is [2Fe-2S] cluster.

The enzyme catalyses (4R,5S)-dethiobiotin + (sulfur carrier)-SH + 2 reduced [2Fe-2S]-[ferredoxin] + 2 S-adenosyl-L-methionine = (sulfur carrier)-H + biotin + 2 5'-deoxyadenosine + 2 L-methionine + 2 oxidized [2Fe-2S]-[ferredoxin]. It participates in cofactor biosynthesis; biotin biosynthesis; biotin from 7,8-diaminononanoate: step 2/2. Functionally, catalyzes the conversion of dethiobiotin (DTB) to biotin by the insertion of a sulfur atom into dethiobiotin via a radical-based mechanism. In Nitrosomonas europaea (strain ATCC 19718 / CIP 103999 / KCTC 2705 / NBRC 14298), this protein is Biotin synthase.